Here is a 446-residue protein sequence, read N- to C-terminus: Phosphoglucosamine mutase (446 aa).

Ser103 acts as the Phosphoserine intermediate in catalysis. Positions 103, 242, 244, and 246 each coordinate Mg(2+). Phosphoserine is present on Ser103.

This sequence belongs to the phosphohexose mutase family. It depends on Mg(2+) as a cofactor. Activated by phosphorylation.

It catalyses the reaction alpha-D-glucosamine 1-phosphate = D-glucosamine 6-phosphate. Its function is as follows. Catalyzes the conversion of glucosamine-6-phosphate to glucosamine-1-phosphate. The protein is Phosphoglucosamine mutase of Vibrio vulnificus (strain CMCP6).